A 187-amino-acid polypeptide reads, in one-letter code: Cytochrome b-245 chaperone 1 (187 aa).

Residues 20–42 (GIRSWSLLVGILSIGLAAAYYSG) form a helical membrane-spanning segment. S168 carries the post-translational modification Phosphoserine.

The protein belongs to the CYBC1 family. As to quaternary structure, interacts with CYBB; CYBC1 may act as a chaperone stabilizing Cytochrome b-245 heterodimer. As to expression, highly expressed in macrophages, neutrophils and monocytes.

Its subcellular location is the endoplasmic reticulum membrane. Its function is as follows. Functions as a chaperone necessary for a stable expression of the CYBA and CYBB subunits of the cytochrome b-245 heterodimer. Controls the phagocyte respiratory burst and is essential for innate immunity. This chain is Cytochrome b-245 chaperone 1, found in Homo sapiens (Human).